A 511-amino-acid chain; its full sequence is Probable G-protein coupled receptor 101 (511 aa).

The Extracellular portion of the chain corresponds to 1 to 35 (MPPSCTNSTQENNGSRVCLPLSKMPISVAHGIIRS). N-linked (GlcNAc...) asparagine glycosylation is found at N7 and N13. A helical transmembrane segment spans residues 36–56 (VVLLVILGVAFLGNVVLGYVL). Residues 57 to 67 (HRKPNLLQVTN) lie on the Cytoplasmic side of the membrane. A helical membrane pass occupies residues 68-90 (RFIFNLLVTDLLQVALVAPWVVS). At 91-106 (TAIPFFWPLNIHFCTA) the chain is on the extracellular side. The cysteines at positions 104 and 182 are disulfide-linked. A helical membrane pass occupies residues 107 to 127 (LVSLTHLFAFASVNTIVVVSV). Over 128 to 149 (DRYLTIIHPLSYPSKMTNRRSY) the chain is Cytoplasmic. Residues 150 to 170 (ILLYGTWIAAFLQSTPPLYGW) traverse the membrane as a helical segment. Over 171–196 (GHATFDDRNAFCSMIWGASPAYTVVS) the chain is Extracellular. Residues 197-217 (VVSFLVIPLGVMIACYSVVFG) form a helical membrane-spanning segment. The Cytoplasmic segment spans residues 218-398 (AARRQQALLY…PPCYECKAAR (181 aa)). Over residues 240 to 261 (DSVVHENEEGAKKRDEFQDKNE) the composition is skewed to basic and acidic residues. Disordered stretches follow at residues 240–315 (DSVV…EVSN) and 367–386 (EAMR…TSDP). A compositionally biased stretch (polar residues) spans 376–385 (PPSRRNSTSD). The chain crosses the membrane as a helical span at residues 399–419 (VIFVIISTYVLSLGPYCFLAV). Over 420 to 432 (LAVWVDIDTRVPQ) the chain is Extracellular. The helical transmembrane segment at 433–453 (WVITIIIWLFFLQCCIHPYVY) threads the bilayer. Residues 454-511 (GYMHKSIKKEIQEVLKKLICKKSPPVEDSHPDLHETEAGTEGGIEGKAVPSHDSATSP) lie on the Cytoplasmic side of the membrane. The tract at residues 476-511 (SPPVEDSHPDLHETEAGTEGGIEGKAVPSHDSATSP) is disordered. Over residues 477-490 (PPVEDSHPDLHETE) the composition is skewed to basic and acidic residues.

The protein belongs to the G-protein coupled receptor 1 family. As to expression, expressed in the brain in hypothalamus.

It localises to the cell membrane. Orphan receptor. The sequence is that of Probable G-protein coupled receptor 101 (Gpr101) from Mus musculus (Mouse).